The following is a 181-amino-acid chain: ATP synthase subunit delta (181 aa).

This sequence belongs to the ATPase delta chain family. As to quaternary structure, F-type ATPases have 2 components, F(1) - the catalytic core - and F(0) - the membrane proton channel. F(1) has five subunits: alpha(3), beta(3), gamma(1), delta(1), epsilon(1). F(0) has three main subunits: a(1), b(2) and c(10-14). The alpha and beta chains form an alternating ring which encloses part of the gamma chain. F(1) is attached to F(0) by a central stalk formed by the gamma and epsilon chains, while a peripheral stalk is formed by the delta and b chains.

It localises to the cell membrane. F(1)F(0) ATP synthase produces ATP from ADP in the presence of a proton or sodium gradient. F-type ATPases consist of two structural domains, F(1) containing the extramembraneous catalytic core and F(0) containing the membrane proton channel, linked together by a central stalk and a peripheral stalk. During catalysis, ATP synthesis in the catalytic domain of F(1) is coupled via a rotary mechanism of the central stalk subunits to proton translocation. Functionally, this protein is part of the stalk that links CF(0) to CF(1). It either transmits conformational changes from CF(0) to CF(1) or is implicated in proton conduction. The polypeptide is ATP synthase subunit delta (Mycoplasma mycoides subsp. mycoides SC (strain CCUG 32753 / NCTC 10114 / PG1)).